We begin with the raw amino-acid sequence, 465 residues long: 2-methylcitrate synthase, mitochondrial (465 aa).

2 residues coordinate CoA: Arg-72 and Lys-190. His-265 provides a ligand contact to oxaloacetate. Leu-300 contributes to the CoA binding site. Residue His-301 is part of the active site. Val-342, Gly-344, and Tyr-345 together coordinate CoA. The oxaloacetate site is built by His-347 and Arg-356. His-347 is an active-site residue. Residues Thr-394, Lys-395, and Asn-400 each coordinate CoA. Residue Asp-402 is part of the active site. The oxaloacetate site is built by Arg-428 and Arg-448.

It belongs to the citrate synthase family. As to quaternary structure, homodimer.

It is found in the mitochondrion matrix. The catalysed reaction is propanoyl-CoA + oxaloacetate + H2O = (2S,3S)-2-methylcitrate + CoA + H(+). It catalyses the reaction oxaloacetate + acetyl-CoA + H2O = citrate + CoA + H(+). The protein operates within organic acid metabolism; propanoate degradation. Its activity is regulated as follows. Activity is inhibited by p-chloromercuribenzoate (pCMB), monoiodoacetamide, H(2)O(2), ATP, ADP, NADH, NADPH, Hg(2+) and Zn(2+). In terms of biological role, component of the methylcitrate cycle that catalyzes the synthesis of (2S,3S)-2-methylcitrate from propionyl-CoA and oxaloacetate. Plays an important role in detoxification of propionyl-CoA, an inhibitor of both primary and secondary metabolism. Also has citrate synthase activity using as substrates acetyl-CoA and oxaloacetate. The chain is 2-methylcitrate synthase, mitochondrial from Yarrowia lipolytica (strain CLIB 122 / E 150) (Yeast).